The sequence spans 302 residues: UTP--glucose-1-phosphate uridylyltransferase (302 aa).

Belongs to the UDPGP type 2 family. As to quaternary structure, homotetramer or homopentamer. Mg(2+) is required as a cofactor.

The enzyme catalyses alpha-D-glucose 1-phosphate + UTP + H(+) = UDP-alpha-D-glucose + diphosphate. May play a role in stationary phase survival. The polypeptide is UTP--glucose-1-phosphate uridylyltransferase (galU) (Escherichia coli O157:H7).